Consider the following 617-residue polypeptide: Type IV inositol polyphosphate 5-phosphatase 6 (617 aa).

Disordered regions lie at residues 30-62 and 241-330; these read EFQADDPSSAGIEVEHRSSFSAEKAPSTIKNTK and DFDP…VLYS. Low complexity predominate over residues 242 to 253; that stretch reads FDPSFRGSSSSH. The span at 254–290 shows a compositional bias: basic and acidic residues; it reads RPSDYSRRPSDYSRRPSDYSRRPSDYSRRPSDSRPSD. The segment covering 291–311 has biased composition (low complexity); it reads YSRPSDYYSRPSDYSRPSDFS. Catalytic stretches follow at residues 458–473 and 538–553; these read DRVIWLGDLNYRIALS and KRRTPAWCDRILWFGE.

This sequence belongs to the inositol polyphosphate 5-phosphatase family. As to expression, broadly expressed in emerging organs. Mostly localized in procambium of growing organs. Restricted to vascular differentiating cells of young organs.

It catalyses the reaction a 1,2-diacyl-sn-glycero-3-phospho-(1D-myo-inositol-4,5-bisphosphate) + H2O = a 1,2-diacyl-sn-glycero-3-phospho-(1D-myo-inositol 4-phosphate) + phosphate. It carries out the reaction a 1,2-diacyl-sn-glycero-3-phospho-(1D-myo-inositol-3,4,5-trisphosphate) + H2O = a 1,2-diacyl-sn-glycero-3-phospho-(1D-myo-inositol-3,4-bisphosphate) + phosphate. Has phosphatase activity toward PtdIns(4,5)P2 and PtdIns(3,4,5)P3. Required for the patterning of procambium and during the differentiation of vascular tissues. Acts before the acquisition of preprocambial identity. Seems to be also involved in the abscisic acid (ABA) signaling pathway. Acts redundantly with CVL1 for maintaining vascular continuity. Regulates phosphoinositide-dependent VAN3 localization. The chain is Type IV inositol polyphosphate 5-phosphatase 6 from Arabidopsis thaliana (Mouse-ear cress).